A 321-amino-acid chain; its full sequence is uncharacterized protein (321 aa).

Residue Y60 is the Proton donor of the active site. Residue H118 participates in substrate binding.

The protein belongs to the aldo/keto reductase family.

This is an uncharacterized protein from Schizosaccharomyces pombe (strain 972 / ATCC 24843) (Fission yeast).